Here is a 513-residue protein sequence, read N- to C-terminus: Pantetheinase (513 aa).

The signal sequence occupies residues Met1–Ser22. Residues Ala40–Ser307 enclose the CN hydrolase domain. Glu80 (proton acceptor) is an active-site residue. Asn147 carries an N-linked (GlcNAc...) asparagine glycan. Lys179 (proton donor) is an active-site residue. Catalysis depends on Cys212, which acts as the Nucleophile. N-linked (GlcNAc...) asparagine glycosylation is found at Asn315 and Asn353. A lipid anchor (GPI-anchor amidated glycine) is attached at Gly487. A propeptide spans Ala488–Trp513 (removed in mature form).

It belongs to the carbon-nitrogen hydrolase superfamily. BTD/VNN family. In terms of assembly, monomer. In terms of tissue distribution, detected in kidney (at protein level).

The protein resides in the cell membrane. It carries out the reaction (R)-pantetheine + H2O = cysteamine + (R)-pantothenate. In terms of biological role, amidohydrolase that hydrolyzes specifically one of the carboamide linkages in D-pantetheine thus recycling pantothenic acid (vitamin B5) and releasing cysteamine. The protein is Pantetheinase (VNN1) of Sus scrofa (Pig).